Consider the following 177-residue polypeptide: Transcription factor E (177 aa).

The 83-residue stretch at 9–91 (VEELLNELVG…YWRINYDKAL (83 aa)) folds into the HTH TFE/IIEalpha-type domain.

This sequence belongs to the TFE family. Monomer. Interaction with RNA polymerase subunits RpoF and RpoE is necessary for Tfe stimulatory transcription activity. Able to interact with Tbp and RNA polymerase in the absence of DNA promoter. Interacts both with the preinitiation and elongation complexes.

Transcription factor that plays a role in the activation of archaeal genes transcribed by RNA polymerase. Facilitates transcription initiation by enhancing TATA-box recognition by TATA-box-binding protein (Tbp), and transcription factor B (Tfb) and RNA polymerase recruitment. Not absolutely required for transcription in vitro, but particularly important in cases where Tbp or Tfb function is not optimal. It dynamically alters the nucleic acid-binding properties of RNA polymerases by stabilizing the initiation complex and destabilizing elongation complexes. Seems to translocate with the RNA polymerase following initiation and acts by binding to the non template strand of the transcription bubble in elongation complexes. This chain is Transcription factor E, found in Archaeoglobus fulgidus (strain ATCC 49558 / DSM 4304 / JCM 9628 / NBRC 100126 / VC-16).